A 412-amino-acid chain; its full sequence is Kelch repeat-containing protein At1g19470 (412 aa).

A disordered region spans residues 1 to 55 (MVNISEIPDDSNDGCDPNKKPEEQVLRRSRRIATRNENQNKKPKEEEEEDNRSVS). Positions 16 to 26 (DPNKKPEEQVL) are enriched in basic and acidic residues. 4 Kelch repeats span residues 156–202 (EMYV…VVDG), 203–250 (KIYV…SAHA), 255–291 (KLYM…WDKT), and 292–345 (CCVV…EMAN).

This chain is Kelch repeat-containing protein At1g19470, found in Arabidopsis thaliana (Mouse-ear cress).